Here is a 638-residue protein sequence, read N- to C-terminus: tRNA uridine 5-carboxymethylaminomethyl modification enzyme MnmG (638 aa).

FAD-binding positions include 15-20 (GAGHAG), I127, and S182. 276–290 (GPRYCPSIEDKIVRF) serves as a coordination point for NAD(+). Q373 serves as a coordination point for FAD.

Belongs to the MnmG family. In terms of assembly, homodimer. Heterotetramer of two MnmE and two MnmG subunits. It depends on FAD as a cofactor.

The protein localises to the cytoplasm. Its function is as follows. NAD-binding protein involved in the addition of a carboxymethylaminomethyl (cmnm) group at the wobble position (U34) of certain tRNAs, forming tRNA-cmnm(5)s(2)U34. The polypeptide is tRNA uridine 5-carboxymethylaminomethyl modification enzyme MnmG (Streptococcus suis (strain 98HAH33)).